A 469-amino-acid chain; its full sequence is Cysteine--tRNA ligase (469 aa).

Position 33 (cysteine 33) interacts with Zn(2+). Residues 35–45 (PTVYNLLHIGN) carry the 'HIGH' region motif. Zn(2+) is bound by residues cysteine 214, histidine 239, and glutamate 243. Residues 271–275 (KMSKS) carry the 'KMSKS' region motif. Lysine 274 is an ATP binding site.

It belongs to the class-I aminoacyl-tRNA synthetase family. As to quaternary structure, monomer. It depends on Zn(2+) as a cofactor.

The protein localises to the cytoplasm. The enzyme catalyses tRNA(Cys) + L-cysteine + ATP = L-cysteinyl-tRNA(Cys) + AMP + diphosphate. The sequence is that of Cysteine--tRNA ligase from Petrotoga mobilis (strain DSM 10674 / SJ95).